The following is a 120-amino-acid chain: ATP-dependent Clp protease adapter protein ClpS (120 aa).

Belongs to the ClpS family. Binds to the N-terminal domain of the chaperone ClpA.

Its function is as follows. Involved in the modulation of the specificity of the ClpAP-mediated ATP-dependent protein degradation. In Azotobacter vinelandii (strain DJ / ATCC BAA-1303), this protein is ATP-dependent Clp protease adapter protein ClpS.